The chain runs to 1403 residues: MAHYFKVDLDEEFERFMKELSDDSFENSNKTPRQPNEDNKEMKKKDPVPWWIAEDDFEDDGLLGTNVSYLKTKKTYQPVMDTEEESAEKVQFLKSSGTSILSVDSLEANELVVSEPHHSTLGLGLDTLEEQEEKEQFFARLEKGLTSSIDYSKLNQELDSDDSAQLKALHRYPRNTEPAEDGCENESEQEELPETYSDDFEDAEDADDPLITKDEETHPKENSESGKDSFPKQEEEKTGMLANVVLLDSFDSVEDVGLSSQEKATPKAKAPPEITDDGPAETGVPYGQSSGDTEALHQAYCHVAHSLGDTGEPRIEASTVQTVRSSIKDGLQENEESSKNVSTTESDLPTVEELMQPIRIDSYGIRAFDLQPISLKKATDSKEAESVGSLPLKTNTNTVSQDTRHAIQFPHKHDESVVLHRTADEGMGSSCPATEEHLDKMYLEILKKKTSVNPSLLPQDDKMNQTSRSQLGAGEEVPVIGKQVPCKKARSTPSLPKRKPQSGLYASARSSGYGKPSSPLQLFSALEKKTSKDNTKTKSVRSIPTSNQFRKREILSGTKLIKPAASNKPSPHREGSPATPKRPEDPSDDSFVQLQTEPLGSYGGNREKELLMLKRAQDAEEKWTGAQALMEQMKMTFCEKEKELENTVESLKRQQERELFRLNQENYILQAKLSSFEETSRKQRWLQFGETSDPLTGEKLKQIQKEIQEQETLLQGYQQENERLYNQVKDLQEQNKKNEERMFKENQNLFSELASLKEQMHKNHFLSQAVENTEPTKNQSFTDLLAELRAAQKEKNHLMEDIKRLKQDKQALEVDLEKVKRERDQAKDQIAYATGEKLYEIKILEETHKQEVSRLQKRLQWYAENQELLDRDAARLREANEETEKLRLEIEKLKTESGSPATQQRLRSKERALDAKRIQDLERQVKEMEGILKRRYPNSLPALILAASAAGDSVDRNTVEFMERRIKKLEADLEGKDEEAKKSLRTMEQQFQKMKIQYEQRLEEQEQLLAHRQKEAPQSQRNSSSRLKALETELGDIKEAHQITVRKLEAEIDVLKHQNADLEHKKNDKGDQGLQSIEFQVEQAQARAKLARLNEELAAKGREIQDLTKTVERLQKERRMMLSRQIPRSREETAAKRLKKDPNRGHGNAFPETLDGKLYHPHTFTDSHISEVLEENYRLRSELEGLILERSKLKMESEAAVCQLENSMKRVKDDAAAHIASLKASHEREIEKLLCQNAIENSSSKVAELNRKIATQEVLLKHFQGQVNELQGKQESLAVSQVREEILQKQITKLLEELKEAKENHTPEMKHFMGLERKIKQMEMRHRQREQELQQIIQQTRQVVETEQNKEVEKWKRLAQLKNRELDKFRTELDSILDVLRELHRQGVVVPMALAGEENTAEF.

A disordered region spans residues 20-46 (LSDDSFENSNKTPRQPNEDNKEMKKKD). Residues 35–46 (PNEDNKEMKKKD) show a composition bias toward basic and acidic residues. Phosphoserine occurs at positions 160 and 163. Disordered regions lie at residues 169 to 243 (LHRY…MLAN), 256 to 292 (VGLSSQEKATPKAKAPPEITDDGPAETGVPYGQSSGD), 306 to 348 (SLGD…ESDL), and 453 to 606 (NPSL…GGNR). Residues 178–208 (PAEDGCENESEQEELPETYSDDFEDAEDADD) show a composition bias toward acidic residues. Residues 210 to 238 (LITKDEETHPKENSESGKDSFPKQEEEKT) show a composition bias toward basic and acidic residues. Residues 485 to 500 (PCKKARSTPSLPKRKP) show a composition bias toward basic residues. Composition is skewed to basic and acidic residues over residues 526–536 (LEKKTSKDNTK) and 571–585 (PHREGSPATPKRPED). A coiled-coil region spans residues 614-1124 (KRAQDAEEKW…QKERRMMLSR (511 aa)). The interval 1126 to 1147 (IPRSREETAAKRLKKDPNRGHG) is disordered. Over residues 1128–1144 (RSREETAAKRLKKDPNR) the composition is skewed to basic and acidic residues. The stretch at 1174 to 1386 (EENYRLRSEL…LDVLRELHRQ (213 aa)) forms a coiled coil.

The protein belongs to the CEP162 family. As to quaternary structure, interacts with CPNE4. Interacts with alpha-tubulin. Interacts with CEP290.

Its subcellular location is the cytoplasm. It localises to the cytoskeleton. The protein localises to the microtubule organizing center. The protein resides in the centrosome. It is found in the centriole. Its subcellular location is the spindle. It localises to the nucleus. Required to promote assembly of the transition zone in primary cilia. Acts by specifically recognizing and binding the axonemal microtubule. Localizes to the distal ends of centrioles before ciliogenesis and directly binds to axonemal microtubule, thereby promoting and restricting transition zone formation specifically at the cilia base. Required to mediate CEP290 association with microtubules. The sequence is that of Centrosomal protein of 162 kDa (Cep162) from Mus musculus (Mouse).